The following is a 690-amino-acid chain: MKGKGEQVFRLESSYEPEGDQPQAIEALRQGVMDGQTNQVLLGVTGSGKTFTMANVIAEVNKPVLLISHNKTLAAQLYGELKQFFPHNAVEYFISYYDFYQPEAYIPTMDKYIAKDLKINDEIERLRLKATSSLLSGRKDVIVVSSVSCIYGLGAPEDWKAQIIELRVNMEKERDSFLQELISLHFVRDDSDLAPGKFRVRGDVIDLVPMHEESALRVEFFGDEIERLQLFDHTTGEIFEDEEYAFIYPARQFVAGREKLQQAMLGIEDELAHRLNVFRSGEKFVEARRIEERTRYDLEMIKELGYCSGIENYSRHLSGRKAGERPYCLLDYFPEDYLVIVDESHVTFPQIRGMYAGDRSRKTILVEYGFRLPSALDNRPLRFEEFETMVPQLISVSATPGDYELRRSGGSVVEQLVRPTGLLDPEIVVRPVNGQIDDLLEEIRKHTGKGFKSLVMTLTKRMSEDLHDYLRKAGLRTRYLHSEIKSLERMQILRELRTGEIDILVGVNLLREGLDLPEVSLVAILDADKEGFLRDSKSLMQIAGRAARNVEGMVVFYADRITASMRYVIDETERRRSVQRKFNEDHGVIPASIVKSVDQVLDTTGVADAEDRFRRRRFGLEQRSRRGIEDLVGSLKREDLYAMAEELRLEMQEAAESMEFEKAAYLRDEVTKLEDAAEEKRESEGGMDSG.

A Helicase ATP-binding domain is found at Gln30 to Arg188. Residue Gly43–Thr50 coordinates ATP. A Beta-hairpin motif is present at residues Tyr96–Ile119. Residues Gln435–Leu601 form the Helicase C-terminal domain. The region spanning Tyr641–Ala676 is the UVR domain.

This sequence belongs to the UvrB family. In terms of assembly, forms a heterotetramer with UvrA during the search for lesions. Interacts with UvrC in an incision complex.

The protein resides in the cytoplasm. In terms of biological role, the UvrABC repair system catalyzes the recognition and processing of DNA lesions. A damage recognition complex composed of 2 UvrA and 2 UvrB subunits scans DNA for abnormalities. Upon binding of the UvrA(2)B(2) complex to a putative damaged site, the DNA wraps around one UvrB monomer. DNA wrap is dependent on ATP binding by UvrB and probably causes local melting of the DNA helix, facilitating insertion of UvrB beta-hairpin between the DNA strands. Then UvrB probes one DNA strand for the presence of a lesion. If a lesion is found the UvrA subunits dissociate and the UvrB-DNA preincision complex is formed. This complex is subsequently bound by UvrC and the second UvrB is released. If no lesion is found, the DNA wraps around the other UvrB subunit that will check the other stand for damage. The protein is UvrABC system protein B of Chlorobium phaeobacteroides (strain BS1).